The sequence spans 344 residues: Ferrochelatase (344 aa).

Fe cation is bound by residues His-214 and Glu-295.

It belongs to the ferrochelatase family.

Its subcellular location is the cytoplasm. The enzyme catalyses heme b + 2 H(+) = protoporphyrin IX + Fe(2+). It participates in porphyrin-containing compound metabolism; protoheme biosynthesis; protoheme from protoporphyrin-IX: step 1/1. Its function is as follows. Catalyzes the ferrous insertion into protoporphyrin IX. The polypeptide is Ferrochelatase (Rhizobium johnstonii (strain DSM 114642 / LMG 32736 / 3841) (Rhizobium leguminosarum bv. viciae)).